The sequence spans 93 residues: U8-theraphotoxin-Hs1b (93 aa).

An N-terminal signal peptide occupies residues 1–18; that stretch reads MKAILLLAIFSVLTVAIC. Cystine bridges form between Cys40/Cys54, Cys40/Cys81, Cys53/Cys66, and Cys84/Cys91.

Belongs to the neurotoxin 27 (Jztx-72) family. ICK-72 subfamily. In terms of tissue distribution, expressed by the venom gland.

It is found in the secreted. Probable neurotoxin with ion channel impairing activity. The protein is U8-theraphotoxin-Hs1b of Cyriopagopus schmidti (Chinese bird spider).